The sequence spans 87 residues: Phosphoribosyl-ATP pyrophosphatase (87 aa).

The protein belongs to the PRA-PH family.

It localises to the cytoplasm. The catalysed reaction is 1-(5-phospho-beta-D-ribosyl)-ATP + H2O = 1-(5-phospho-beta-D-ribosyl)-5'-AMP + diphosphate + H(+). The protein operates within amino-acid biosynthesis; L-histidine biosynthesis; L-histidine from 5-phospho-alpha-D-ribose 1-diphosphate: step 2/9. This Thermobifida fusca (strain YX) protein is Phosphoribosyl-ATP pyrophosphatase.